Reading from the N-terminus, the 65-residue chain is Small ribosomal subunit protein bS21 (65 aa).

It belongs to the bacterial ribosomal protein bS21 family.

The sequence is that of Small ribosomal subunit protein bS21 from Aster yellows phytoplasma.